Here is a 386-residue protein sequence, read N- to C-terminus: MVRTRYEYSLRSKKIRIFDTTLRDGEQAPGIDLTTEQKIMIARKLADLGVDVIEAGFPASSEGEFIATRKIFEEIGDQVEVIGLSRSNKNDIDKTISTGISSIHLFIATSELHMKYKLKMTKEEVLNKIYESVKYAKDHGMIVEFSPEDATRTEEDFLFTAIRTAIEAGADRINIPDTVGTMHPFKYYDMIKKIVNFVGERIIVSVHCHNDFGLATANSLAGVYAGARQAHVTVNGIGERAGNASLEEVVMGIKKLLNYETNVKTWKLYEVSRFVAEMTGVPVPYFKAIVGDNAFGHESGIHVHGVIENPFTYEPISPEEVGNFRRLALGKHSGIHGLRKLLEEQGIYLSDDKLKIVLAEIKKLAESGNKVTVEDAKNIALKLMNS.

In terms of domain architecture, Pyruvate carboxyltransferase spans isoleucine 15 to tyrosine 269. Residues aspartate 24, histidine 207, histidine 209, and asparagine 243 each contribute to the a divalent metal cation site.

Belongs to the alpha-IPM synthase/homocitrate synthase family. Homodimer. The cofactor is a divalent metal cation.

The enzyme catalyses 3-methyl-2-oxobutanoate + acetyl-CoA + H2O = (2S)-2-isopropylmalate + CoA + H(+). It participates in amino-acid biosynthesis; L-leucine biosynthesis; L-leucine from 3-methyl-2-oxobutanoate: step 1/4. In terms of biological role, catalyzes the condensation of the acetyl group of acetyl-CoA with 3-methyl-2-oxobutanoate (2-oxoisovalerate) to form 3-carboxy-3-hydroxy-4-methylpentanoate (2-isopropylmalate). Carries out the first step of the leucine biosynthesis pathway. The polypeptide is 2-isopropylmalate synthase (leuA) (Saccharolobus solfataricus (strain ATCC 35092 / DSM 1617 / JCM 11322 / P2) (Sulfolobus solfataricus)).